Here is a 66-residue protein sequence, read N- to C-terminus: Large ribosomal subunit protein bL33c (66 aa).

This sequence belongs to the bacterial ribosomal protein bL33 family.

It localises to the plastid. The protein localises to the chloroplast. This is Large ribosomal subunit protein bL33c from Lotus japonicus (Lotus corniculatus var. japonicus).